The chain runs to 325 residues: Beta-ketoacyl-[acyl-carrier-protein] synthase III (325 aa).

Catalysis depends on residues Cys-112 and His-250. The segment at 251-255 (QANSR) is ACP-binding. Asn-280 is a catalytic residue.

It belongs to the thiolase-like superfamily. FabH family. In terms of assembly, homodimer.

It is found in the cytoplasm. The catalysed reaction is malonyl-[ACP] + acetyl-CoA + H(+) = 3-oxobutanoyl-[ACP] + CO2 + CoA. It functions in the pathway lipid metabolism; fatty acid biosynthesis. Its function is as follows. Catalyzes the condensation reaction of fatty acid synthesis by the addition to an acyl acceptor of two carbons from malonyl-ACP. Catalyzes the first condensation reaction which initiates fatty acid synthesis and may therefore play a role in governing the total rate of fatty acid production. Possesses both acetoacetyl-ACP synthase and acetyl transacylase activities. Its substrate specificity determines the biosynthesis of branched-chain and/or straight-chain of fatty acids. This Lactococcus lactis subsp. cremoris (strain SK11) protein is Beta-ketoacyl-[acyl-carrier-protein] synthase III.